A 107-amino-acid chain; its full sequence is Nucleoid-associated protein mlr5504 (107 aa).

It belongs to the YbaB/EbfC family. In terms of assembly, homodimer.

The protein localises to the cytoplasm. Its subcellular location is the nucleoid. Binds to DNA and alters its conformation. May be involved in regulation of gene expression, nucleoid organization and DNA protection. The chain is Nucleoid-associated protein mlr5504 from Mesorhizobium japonicum (strain LMG 29417 / CECT 9101 / MAFF 303099) (Mesorhizobium loti (strain MAFF 303099)).